A 169-amino-acid polypeptide reads, in one-letter code: S-ribosylhomocysteine lyase (169 aa).

Residues His-54, His-58, and Cys-128 each coordinate Fe cation.

Belongs to the LuxS family. As to quaternary structure, homodimer. The cofactor is Fe cation.

The enzyme catalyses S-(5-deoxy-D-ribos-5-yl)-L-homocysteine = (S)-4,5-dihydroxypentane-2,3-dione + L-homocysteine. Involved in the synthesis of autoinducer 2 (AI-2) which is secreted by bacteria and is used to communicate both the cell density and the metabolic potential of the environment. The regulation of gene expression in response to changes in cell density is called quorum sensing. Catalyzes the transformation of S-ribosylhomocysteine (RHC) to homocysteine (HC) and 4,5-dihydroxy-2,3-pentadione (DPD). The chain is S-ribosylhomocysteine lyase from Sulfurovum sp. (strain NBC37-1).